Here is a 272-residue protein sequence, read N- to C-terminus: NADH-dependent L-xylulose reductase (272 aa).

2 residues coordinate NADP(+): Leu24 and Asp78. Ser160 serves as the catalytic Proton donor. NADP(+)-binding residues include Tyr175, Lys179, and Ile208. The Proton acceptor role is filled by Tyr175. Lys179 (lowers pKa of active site Tyr) is an active-site residue.

This sequence belongs to the short-chain dehydrogenases/reductases (SDR) family.

It catalyses the reaction xylitol + NAD(+) = L-xylulose + NADH + H(+). The catalysed reaction is D-arabinitol + NAD(+) = D-ribulose + NADH + H(+). NADH-dependent L-xylulose reductase; part of the yeast pathway for L-arabinose catabolism. Reversibly converts L-xylulose to xylitol and D-ribulose to D-arabinitol. It has a much lower activity with D-xylulose. Sugar alcohols can serve as a substrate when the hydroxyl group of C-2 is in the L- and the hydroxyl group of the C-3 is in the D-configuration. Also seems to be specific for sugar alcohols that have not more than 5 carbons since no activity is observed with dulcitol (galactitol), which has the hydroxyl group of C-2 in L- and of C-3 in D-configuration, but is a six-carbon sugar alcohol. This is NADH-dependent L-xylulose reductase from Ambrosiozyma monospora (Yeast).